A 431-amino-acid chain; its full sequence is Acetylornithine aminotransferase (431 aa).

Residues 118–119 (GA) and Phe157 each bind pyridoxal 5'-phosphate. Residue Arg160 participates in N(2)-acetyl-L-ornithine binding. 251–254 (DEVQ) contributes to the pyridoxal 5'-phosphate binding site. An N6-(pyridoxal phosphate)lysine modification is found at Lys284. Ser313 lines the N(2)-acetyl-L-ornithine pocket. Thr314 provides a ligand contact to pyridoxal 5'-phosphate.

The protein belongs to the class-III pyridoxal-phosphate-dependent aminotransferase family. ArgD subfamily. As to quaternary structure, homodimer. It depends on pyridoxal 5'-phosphate as a cofactor.

The protein localises to the cytoplasm. The catalysed reaction is N(2)-acetyl-L-ornithine + 2-oxoglutarate = N-acetyl-L-glutamate 5-semialdehyde + L-glutamate. The protein operates within amino-acid biosynthesis; L-arginine biosynthesis; N(2)-acetyl-L-ornithine from L-glutamate: step 4/4. This is Acetylornithine aminotransferase from Bifidobacterium longum (strain NCC 2705).